We begin with the raw amino-acid sequence, 927 residues long: Solute carrier family 12 protein B0303.11 (927 aa).

The Cytoplasmic portion of the chain corresponds to 1–23; the sequence is MPSSTASSEDAPITSTAWMNWKD. A helical transmembrane segment spans residues 24–44; it reads VFLKCVQPMLAVVLLLRFSSI. The Extracellular segment spans residues 45–53; sequence VDEAGFTTT. A helical transmembrane segment spans residues 54-74; that stretch reads IILVFFTFLVSLVTGWSACTV. Residues 75 to 95 are Cytoplasmic-facing; it reads VSRKSSEVGFVKTMLAYSSTE. The chain crosses the membrane as a helical span at residues 96 to 116; that stretch reads FAISFSIIYLFCLLVATSTFL. The Extracellular portion of the chain corresponds to 117–141; sequence TSAAEAVLHIFSTFSLELLDGATHD. A helical membrane pass occupies residues 142–159; sequence LRLVSSVLSLITLALCMV. The Cytoplasmic portion of the chain corresponds to 160-165; it reads RNRNAR. The chain crosses the membrane as a helical span at residues 166–186; sequence FVRTFIFALTCIAIALQLSSV. Topologically, residues 187 to 212 are extracellular; the sequence is MFRYGEYQLRRVSDRNAMIPSPPNEE. The helical transmembrane segment at 213–233 threads the bilayer; it reads ISTIFAQLFPAAMCGLTILNI. Residues 234 to 244 lie on the Cytoplasmic side of the membrane; that stretch reads GSKLQNTAPRG. A helical membrane pass occupies residues 245–265; that stretch reads ALIAIAVSACFYGAAAMLDYV. Topologically, residues 266-284 are extracellular; the sequence is EFFARTSTSNSTGSAEYNE. N275 carries N-linked (GlcNAc...) asparagine glycosylation. The chain crosses the membrane as a helical span at residues 285–305; the sequence is FLSYIYTTVPMAIVITLACVL. At 306 to 345 the chain is on the cytoplasmic side; that stretch reads SAVSTLKYAAVILQSLGRSNQCRCILWLAKGFGERDIPIR. Residues 346–366 traverse the membrane as a helical segment; that stretch reads CLLLLSTVQILVSAIGSYDIL. C367 is a topological domain (extracellular). Residues 368–388 traverse the membrane as a helical segment; that stretch reads IPTTVFYLFAYALFNFYVFLV. Residues 389–394 are Cytoplasmic-facing; sequence KLSDPE. Residues 395–415 traverse the membrane as a helical segment; the sequence is IPSPPTLLSLAISAACFIASL. The Extracellular portion of the chain corresponds to 416–419; it reads YTNR. The helical transmembrane segment at 420–440 threads the bilayer; it reads HLALFIASIFAISYCSLLYII. At 441-927 the chain is on the cytoplasmic side; it reads RRERNEDGEE…SMSALRLKFP (487 aa).

Belongs to the SLC12A transporter family.

The protein resides in the cell membrane. In Caenorhabditis elegans, this protein is Solute carrier family 12 protein B0303.11.